The chain runs to 213 residues: Peroxynitrite isomerase (213 aa).

Low complexity predominate over residues 1 to 10 (MGADATGDTA). The disordered stretch occupies residues 1-26 (MGADATGDTAARGDRAAHGDTASGGA). The GXWXGXG signature appears at 51–57 (GTWRGEG). His-203 provides a ligand contact to heme b.

This sequence belongs to the nitrobindin family. Homodimer. The cofactor is heme b.

It catalyses the reaction peroxynitrite = nitrate. The protein operates within nitrogen metabolism. Functionally, heme-binding protein able to scavenge peroxynitrite and to protect free L-tyrosine against peroxynitrite-mediated nitration, by acting as a peroxynitrite isomerase that converts peroxynitrite to nitrate. Therefore, this protein likely plays a role in peroxynitrite sensing and in the detoxification of reactive nitrogen and oxygen species (RNS and ROS, respectively). Is able to bind nitric oxide (NO) in vitro, but may act as a sensor of peroxynitrite levels in vivo. The protein is Peroxynitrite isomerase of Parafrankia sp. (strain EAN1pec).